The following is a 489-amino-acid chain: Acetyl-coenzyme A carboxylase carboxyl transferase subunit beta, chloroplastic (489 aa).

In terms of domain architecture, CoA carboxyltransferase N-terminal spans 225–489 (LWIQCDNCYG…FFPLNKNEIK (265 aa)). Cysteine 229, cysteine 232, cysteine 245, and cysteine 248 together coordinate Zn(2+). The C4-type zinc-finger motif lies at 229–248 (CDNCYGLKYKKVEMNVCEEC).

This sequence belongs to the AccD/PCCB family. As to quaternary structure, acetyl-CoA carboxylase is a heterohexamer composed of biotin carboxyl carrier protein, biotin carboxylase and 2 subunits each of ACCase subunit alpha and ACCase plastid-coded subunit beta (accD). Zn(2+) is required as a cofactor.

It localises to the plastid. Its subcellular location is the chloroplast stroma. It carries out the reaction N(6)-carboxybiotinyl-L-lysyl-[protein] + acetyl-CoA = N(6)-biotinyl-L-lysyl-[protein] + malonyl-CoA. Its pathway is lipid metabolism; malonyl-CoA biosynthesis; malonyl-CoA from acetyl-CoA: step 1/1. Functionally, component of the acetyl coenzyme A carboxylase (ACC) complex. Biotin carboxylase (BC) catalyzes the carboxylation of biotin on its carrier protein (BCCP) and then the CO(2) group is transferred by the transcarboxylase to acetyl-CoA to form malonyl-CoA. In Brassica napus (Rape), this protein is Acetyl-coenzyme A carboxylase carboxyl transferase subunit beta, chloroplastic.